Consider the following 305-residue polypeptide: Major fimbrium anchoring subunit FimB (305 aa).

A signal peptide spans 1 to 22; the sequence is MNDAKKYIVSVLILLVAGMFGG. The N-palmitoyl cysteine moiety is linked to residue Cys-23. The S-diacylglycerol cysteine moiety is linked to residue Cys-23.

Belongs to the bacteroidetes fimbrillin superfamily. FimB/Mfa2 family. In terms of assembly, fimB is not part of the fimbrium itself, but anchors the fimbrium in the outer membrane. Linear, head-to-tail oligomerization of fimbrial subunits mediates assembly of the fimbrium stalk, while the minor components FimC, FimD and FimE probably form the fimbrium tip. The anchoring subunit FimB limits fimbrium length and is important for solid fimbrium attachment to the outer membrane. In its absence, the major fimbriae become very long and are easily detached from the membrane.

It localises to the cell outer membrane. Its function is as follows. Anchoring subunit of the major fimbriae. Regulates fimbrial length. These filamentous pili are attached to the cell surface; they mediate biofilm formation, adhesion onto host cells and onto other bacteria that are part of the oral microbiome. Fimbriae of P.gingivalis are major virulence factors. This is Major fimbrium anchoring subunit FimB from Porphyromonas gingivalis (Bacteroides gingivalis).